Consider the following 413-residue polypeptide: Putative competence-damage inducible protein (413 aa).

It belongs to the CinA family.

This is Putative competence-damage inducible protein from Lacticaseibacillus casei (strain BL23) (Lactobacillus casei).